The following is a 636-amino-acid chain: Probable potassium transport system protein Kup (636 aa).

A run of 12 helical transmembrane segments spans residues 22 to 42, 64 to 84, 115 to 135, 150 to 170, 182 to 202, 220 to 240, 261 to 281, 293 to 313, 351 to 371, 383 to 403, 408 to 428, and 433 to 453; these read VGLL…SPLY, ILSL…VMFI, LMVI…MITP, FDGI…ALFL, LFGP…VHGI, FFVV…LALT, WFIL…ALLL, LLAP…ATVI, IYIG…VIGF, VAVT…MLLL, PLLA…FFAA, and IAQG…LMST.

It belongs to the HAK/KUP transporter (TC 2.A.72) family.

The protein localises to the cell inner membrane. It catalyses the reaction K(+)(in) + H(+)(in) = K(+)(out) + H(+)(out). Functionally, transport of potassium into the cell. Likely operates as a K(+):H(+) symporter. The polypeptide is Probable potassium transport system protein Kup (Pseudomonas putida (strain ATCC 47054 / DSM 6125 / CFBP 8728 / NCIMB 11950 / KT2440)).